We begin with the raw amino-acid sequence, 310 residues long: Methionyl-tRNA formyltransferase (310 aa).

(6S)-5,6,7,8-tetrahydrofolate is bound at residue 109–112; it reads SLLP.

Belongs to the Fmt family.

It catalyses the reaction L-methionyl-tRNA(fMet) + (6R)-10-formyltetrahydrofolate = N-formyl-L-methionyl-tRNA(fMet) + (6S)-5,6,7,8-tetrahydrofolate + H(+). In terms of biological role, attaches a formyl group to the free amino group of methionyl-tRNA(fMet). The formyl group appears to play a dual role in the initiator identity of N-formylmethionyl-tRNA by promoting its recognition by IF2 and preventing the misappropriation of this tRNA by the elongation apparatus. This chain is Methionyl-tRNA formyltransferase, found in Alkaliphilus oremlandii (strain OhILAs) (Clostridium oremlandii (strain OhILAs)).